The sequence spans 776 residues: Calcium-independent phospholipase A2-gamma (776 aa).

N-linked (GlcNAc...) asparagine glycosylation is found at Asn4 and Asn157. Disordered regions lie at residues 216–276 (KGKM…HPVS) and 306–334 (KLKSDPKSPPEEQEVSAKTEQAVNKDKKA). Composition is skewed to basic and acidic residues over residues 221–239 (QTKEDKQLQDKPDLEERKS) and 247–263 (VADRPDSESPLEVKDKL). The region spanning 439–634 (LTIDGGGTRG…LLNNPSALAL (196 aa)) is the PNPLA domain. The GXGXXG motif lies at 443 to 448 (GGGTRG). Residues 469–489 (LFDYICGVSTGAILAFMLGLF) traverse the membrane as a helical segment. The GXSXG motif lies at 475-479 (GVSTG). The active-site Nucleophile is the Ser477. Asp621 (proton acceptor) is an active-site residue. The DGA/G signature appears at 621–623 (DGG). The residue at position 730 (Lys730) is an N6-succinyllysine.

As to expression, expressed in myocardium (at protein level).

The protein localises to the endoplasmic reticulum membrane. Its subcellular location is the mitochondrion membrane. It is found in the peroxisome membrane. It carries out the reaction a 1,2-diacyl-sn-glycero-3-phosphocholine + H2O = a 1-acyl-sn-glycero-3-phosphocholine + a fatty acid + H(+). It catalyses the reaction a 1,2-diacyl-sn-glycero-3-phosphocholine + H2O = a 2-acyl-sn-glycero-3-phosphocholine + a fatty acid + H(+). The catalysed reaction is a 1,2-diacyl-sn-glycero-3-phosphoethanolamine + H2O = a 1-acyl-sn-glycero-3-phosphoethanolamine + a fatty acid + H(+). The enzyme catalyses a 1-O-(1Z-alkenyl)-2-acyl-sn-glycero-3-phosphocholine + H2O = a 1-O-(1Z-alkenyl)-sn-glycero-3-phosphocholine + a fatty acid + H(+). It carries out the reaction a 1-acyl-sn-glycero-3-phosphocholine + H2O = sn-glycerol 3-phosphocholine + a fatty acid + H(+). It catalyses the reaction 1-hexadecanoyl-2-(5Z,8Z,11Z,14Z-eicosatetraenoyl)-sn-glycero-3-phosphocholine + H2O = 2-(5Z,8Z,11Z,14Z)-eicosatetraenoyl-sn-glycero-3-phosphocholine + hexadecanoate + H(+). The catalysed reaction is 1-acyl-2-(9Z,12Z)-octadecadienoyl-sn-glycero-3-phosphocholine + H2O = a 1-acyl-sn-glycero-3-phosphocholine + (9Z,12Z)-octadecadienoate + H(+). The enzyme catalyses 1-acyl-2-(5Z,8Z,11Z,14Z-eicosatetraenoyl)-sn-glycero-3-phosphocholine + H2O = a 1-acyl-sn-glycero-3-phosphocholine + (5Z,8Z,11Z,14Z)-eicosatetraenoate + H(+). It carries out the reaction 1-hexadecanoyl-2-(5Z,8Z,11Z,14Z-eicosatetraenoyl)-sn-glycero-3-phosphocholine + H2O = 1-hexadecanoyl-sn-glycero-3-phosphocholine + (5Z,8Z,11Z,14Z)-eicosatetraenoate + H(+). It catalyses the reaction 1-octadecanoyl-2-(9Z-octadecenoyl)-sn-glycero-3-phosphocholine + H2O = 1-octadecanoyl-sn-glycero-3-phosphocholine + (9Z)-octadecenoate + H(+). The catalysed reaction is 1-hexadecanoyl-2-(9Z-octadecenoyl)-sn-glycero-3-phosphocholine + H2O = 1-hexadecanoyl-sn-glycero-3-phosphocholine + (9Z)-octadecenoate + H(+). The enzyme catalyses 1-hexadecanoyl-2-(9Z,12Z-octadecadienoyl)-sn-glycero-3-phosphocholine + H2O = (9Z,12Z)-octadecadienoate + 1-hexadecanoyl-sn-glycero-3-phosphocholine + H(+). It carries out the reaction 1-acyl-2-(9Z,12Z)-octadecadienoyl-sn-glycero-3-phosphoethanolamine + H2O = a 1-acyl-sn-glycero-3-phosphoethanolamine + (9Z,12Z)-octadecadienoate + H(+). It catalyses the reaction 1-acyl-2-(5Z,8Z,11Z,14Z)-eicosatetraenoyl-sn-glycero-3-phosphoethanolamine + H2O = a 1-acyl-sn-glycero-3-phosphoethanolamine + (5Z,8Z,11Z,14Z)-eicosatetraenoate + H(+). The catalysed reaction is 1-hexadecanoyl-2-(5Z,8Z,11Z,14Z-eicosatetraenoyl)-sn-glycero-3-phosphoethanolamine + H2O = 1-hexadecanoyl-sn-glycero-3-phosphoethanolamine + (5Z,8Z,11Z,14Z)-eicosatetraenoate + H(+). The enzyme catalyses 1-octadecanoyl-2-(9Z-octadecenoyl)-sn-glycero-3-phosphocholine + H2O = 2-(9Z-octadecenoyl)-sn-glycero-3-phosphocholine + octadecanoate + H(+). It carries out the reaction 1-hexadecanoyl-2-(4Z,7Z,10Z,13Z,16Z,19Z-docosahexaenoyl)-sn-glycero-3-phosphocholine + H2O = 2-(4Z,7Z,10Z,13Z,16Z,19Z-docosahexaenoyl)-sn-glycero-3-phosphocholine + hexadecanoate + H(+). It catalyses the reaction 1-O-(1Z)-hexadecenyl-2 (5Z,8Z,11Z,14Z)-eicosatetraenoyl-sn-glycero-3-phosphocholine + H2O = 1-(1Z-hexadecenyl)-sn-glycero-3-phosphocholine + (5Z,8Z,11Z,14Z)-eicosatetraenoate + H(+). The catalysed reaction is 1-O-(1Z-hexadecenyl)-2-(9Z-octadecenoyl)-sn-glycero-3-phosphocholine + H2O = 1-(1Z-hexadecenyl)-sn-glycero-3-phosphocholine + (9Z)-octadecenoate + H(+). The enzyme catalyses 1-hexadecanoyl-sn-glycero-3-phosphocholine + H2O = sn-glycerol 3-phosphocholine + hexadecanoate + H(+). It carries out the reaction 1',3'-bis-[1,2-di-(9Z,12Z-octadecadienoyl)-sn-glycero-3-phospho]-glycerol + H2O = 1'-[1,2-di-(9Z,12Z-octadecadienoyl)-sn-glycero-3-phospho]-3'-[1-(9Z,12Z-octadecadienoyl)-sn-glycero-3-phospho]-glycerol + (9Z,12Z)-octadecadienoate + H(+). It catalyses the reaction 1'-[1-acyl-2-(9-hydroxy-(10E,12Z)-octadecadienoyl)-sn-glycero-3-phospho]-3'-[1,2-diacyl-sn-glycero-3-phospho]-glycerol + H2O = 9-hydroxy-(10E,12Z)-octadecadienoate + 1'-[1,2-diacyl-sn-glycero-3-phospho],3'-[1-acyl-sn-glycero-3-phospho]-glycerol + H(+). The protein operates within phospholipid metabolism. With respect to regulation, calcium-independent phospholipase. Functionally, calcium-independent and membrane-bound phospholipase, that catalyzes the esterolytic cleavage of fatty acids from glycerophospholipids to yield free fatty acids and lysophospholipids, hence regulating membrane physical properties and the release of lipid second messengers and growth factors. Hydrolyzes phosphatidylethanolamine, phosphatidylcholine and probably phosphatidylinositol with a possible preference for the former. Also has a broad substrate specificity in terms of fatty acid moieties, hydrolyzing saturated and mono-unsaturated fatty acids at nearly equal rates from either the sn-1 or sn-2 position in diacyl phosphatidylcholine. However, has a weak activity toward polyunsaturated fatty acids at the sn-2 position, and thereby favors the production of 2-arachidonoyl lysophosphatidylcholine, a key branch point metabolite in eicosanoid signaling. On the other hand, can produce arachidonic acid from the sn-1 position of diacyl phospholipid and from the sn-2 position of arachidonate-containing plasmalogen substrates. Therefore, plays an important role in the mobilization of arachidonic acid in response to cellular stimuli and the generation of lipid second messengers. Can also hydrolyze lysophosphatidylcholine. In the mitochondrial compartment, catalyzes the hydrolysis and release of oxidized aliphatic chains from cardiolipin and integrates mitochondrial bioenergetics and signaling. It is essential for maintaining efficient bioenergetic mitochondrial function through tailoring mitochondrial membrane lipid metabolism and composition. This chain is Calcium-independent phospholipase A2-gamma, found in Mus musculus (Mouse).